Consider the following 362-residue polypeptide: 3-dehydroquinate synthase (362 aa).

Residues Asp-71–Lys-76, Gly-105–Asp-109, Thr-129–Thr-130, Lys-142, Lys-151, and Cys-169–Thr-172 contribute to the NAD(+) site. Zn(2+)-binding residues include Glu-184, His-247, and His-264.

The protein belongs to the sugar phosphate cyclases superfamily. Dehydroquinate synthase family. NAD(+) serves as cofactor. It depends on Co(2+) as a cofactor. Zn(2+) is required as a cofactor.

It localises to the cytoplasm. It carries out the reaction 7-phospho-2-dehydro-3-deoxy-D-arabino-heptonate = 3-dehydroquinate + phosphate. The protein operates within metabolic intermediate biosynthesis; chorismate biosynthesis; chorismate from D-erythrose 4-phosphate and phosphoenolpyruvate: step 2/7. In terms of biological role, catalyzes the conversion of 3-deoxy-D-arabino-heptulosonate 7-phosphate (DAHP) to dehydroquinate (DHQ). This chain is 3-dehydroquinate synthase, found in Shigella flexneri.